A 224-amino-acid chain; its full sequence is Protein HLJ1 (224 aa).

The region spanning 18 to 87 is the J domain; that stretch reads DKHEFYEILK…RSIYDRIGRD (70 aa). Basic and acidic residues predominate over residues 84-93; that stretch reads IGRDPDDRQM. The disordered stretch occupies residues 84-107; it reads IGRDPDDRQMPSRGAASGFRGSAG. Serine 109 is subject to Phosphoserine. The tract at residues 173 to 192 is disordered; it reads NRGGSPFMRQQPRSRQQQQQ. Residues 181–192 show a composition bias toward low complexity; the sequence is RQQPRSRQQQQQ.

This is Protein HLJ1 (HLJ1) from Saccharomyces cerevisiae (strain ATCC 204508 / S288c) (Baker's yeast).